The chain runs to 58 residues: Cecropin-A (58 aa).

A signal peptide spans 1-23; it reads MNFSKIFIFVVLAVLLLCSQTEA. Leucine 57 is subject to Leucine amide.

The protein belongs to the cecropin family. In terms of tissue distribution, relatively abundant in head, thorax and to a lesser extent in abdominal carcass and anterior midgut.

It is found in the secreted. In terms of biological role, antibacterial activity against several Gram-positive and Gram-negative bacteria. Antifungal activity against A.fumigatus, B.cinerea, F.culmorum, F.oxysporum, N.crassa, C.albicans, C.neoformans and S.cerevisiae. In Anopheles gambiae (African malaria mosquito), this protein is Cecropin-A (CecA).